An 85-amino-acid polypeptide reads, in one-letter code: Large ribosomal subunit protein uL29 (85 aa).

This sequence belongs to the universal ribosomal protein uL29 family.

The sequence is that of Large ribosomal subunit protein uL29 from Thermobifida fusca (strain YX).